Reading from the N-terminus, the 114-residue chain is Mediator of RNA polymerase II transcription subunit 11 (114 aa).

Residues 28–61 (LELSKEKANASLLDRQLNQFQTSINRVESELSSQ) adopt a coiled-coil conformation.

Belongs to the Mediator complex subunit 11 family. In terms of assembly, component of the Mediator complex. In terms of tissue distribution, ubiquitously expressed at early stage of development. After fertilization expressed in head region as well as in lateral line primordium.

It localises to the nucleus. Functionally, component of the Mediator complex, a coactivator involved in the regulated transcription of nearly all RNA polymerase II-dependent genes. Mediator functions as a bridge to convey information from gene-specific regulatory proteins to the basal RNA polymerase II transcription machinery. Mediator is recruited to promoters by direct interactions with regulatory proteins and serves as a scaffold for the assembly of a functional pre-initiation complex with RNA polymerase II and the general transcription factors. In Danio rerio (Zebrafish), this protein is Mediator of RNA polymerase II transcription subunit 11 (med11).